Here is a 266-residue protein sequence, read N- to C-terminus: Amylovoran biosynthesis glycosyltransferase AmsE (266 aa).

This sequence belongs to the glycosyltransferase 2 family.

Its pathway is glycan metabolism; exopolysaccharide biosynthesis. Its function is as follows. Involved in the biosynthesis of amylovoran which functions as a virulence factor. The polypeptide is Amylovoran biosynthesis glycosyltransferase AmsE (amsE) (Erwinia amylovora (Fire blight bacteria)).